Consider the following 96-residue polypeptide: Iron-sulfur cluster assembly protein CyaY (96 aa).

Belongs to the frataxin family.

In terms of biological role, involved in iron-sulfur (Fe-S) cluster assembly. May act as a regulator of Fe-S biogenesis. The polypeptide is Iron-sulfur cluster assembly protein CyaY (Rickettsia bellii (strain RML369-C)).